A 102-amino-acid chain; its full sequence is Large ribosomal subunit protein bL21 (102 aa).

This sequence belongs to the bacterial ribosomal protein bL21 family. In terms of assembly, part of the 50S ribosomal subunit. Contacts protein L20.

This protein binds to 23S rRNA in the presence of protein L20. This chain is Large ribosomal subunit protein bL21, found in Lachnoclostridium phytofermentans (strain ATCC 700394 / DSM 18823 / ISDg) (Clostridium phytofermentans).